Reading from the N-terminus, the 701-residue chain is Ribosomal RNA large subunit methyltransferase K/L (701 aa).

The THUMP domain occupies 44–155 (QAYKICLWSR…SDKLTVYLDL (112 aa)).

The protein belongs to the methyltransferase superfamily. RlmKL family.

The protein resides in the cytoplasm. The enzyme catalyses guanosine(2445) in 23S rRNA + S-adenosyl-L-methionine = N(2)-methylguanosine(2445) in 23S rRNA + S-adenosyl-L-homocysteine + H(+). It catalyses the reaction guanosine(2069) in 23S rRNA + S-adenosyl-L-methionine = N(2)-methylguanosine(2069) in 23S rRNA + S-adenosyl-L-homocysteine + H(+). Functionally, specifically methylates the guanine in position 2445 (m2G2445) and the guanine in position 2069 (m7G2069) of 23S rRNA. The polypeptide is Ribosomal RNA large subunit methyltransferase K/L (Pseudoalteromonas atlantica (strain T6c / ATCC BAA-1087)).